The following is a 415-amino-acid chain: MGRRPQLRLVKALLLLGLNSISASLQDQHCESLSLASNVSGLQCNASVDLNGTCWPQSPAGQLVVRPCLVFFYGVRYNTTSNGYRVCLANGTWAARVNHSECQEILSEGEKSKAHYHIAVIINYLGHCISLAALLVAFVLFLRLRSIRCVRNIIHWNLISAFILRNATWFVVQLTMSPEVHQSNVGWCRLVTAAYNYFHVTNFFWMFGEGCYLHTAVVLTYSTDRLRKWMFICIGWGVPFPIIVAWAIGKLYYDNEKCWFGKRPGVYTDYIYQGPMILVLLINFIFLFNIVRILMTKLRASTTSETIQYRKAVKATLVLLPLLGITYMLFFVNPGEDEVSRVVFIYFNSFLESFQGFFVSVFYCFLNSEVRSAIRKRWHRWQDKHSIRARVARAMSIPTSPTRVSFHSIKQSTAV.

The first 23 residues, 1 to 23 (MGRRPQLRLVKALLLLGLNSISA), serve as a signal peptide directing secretion. At 24-111 (SLQDQHCESL…CQEILSEGEK (88 aa)) the chain is on the extracellular side. 3 disulfide bridges follow: cysteine 30–cysteine 54, cysteine 44–cysteine 87, and cysteine 68–cysteine 102. 6 N-linked (GlcNAc...) asparagine glycosylation sites follow: asparagine 38, asparagine 45, asparagine 51, asparagine 78, asparagine 90, and asparagine 98. An important for peptide agonist binding region spans residues 99-108 (HSECQEILSE). A helical transmembrane segment spans residues 112-142 (SKAHYHIAVIINYLGHCISLAALLVAFVLFL). At 143 to 149 (RLRSIRC) the chain is on the cytoplasmic side. The chain crosses the membrane as a helical span at residues 150–174 (VRNIIHWNLISAFILRNATWFVVQL). Topologically, residues 175-189 (TMSPEVHQSNVGWCR) are extracellular. Cysteine 188 and cysteine 258 are joined by a disulfide. The chain crosses the membrane as a helical span at residues 190–218 (LVTAAYNYFHVTNFFWMFGEGCYLHTAVV). Topologically, residues 219–225 (LTYSTDR) are cytoplasmic. Residues 226 to 253 (LRKWMFICIGWGVPFPIIVAWAIGKLYY) form a helical membrane-spanning segment. Residues 254 to 269 (DNEKCWFGKRPGVYTD) lie on the Extracellular side of the membrane. A helical membrane pass occupies residues 270–295 (YIYQGPMILVLLINFIFLFNIVRILM). Residues 280 to 290 (LLINFIFLFNI) form an important for antagonist binding region. At 296–306 (TKLRASTTSET) the chain is on the cytoplasmic side. Serine 301 bears the Phosphoserine; by PKA mark. The helical transmembrane segment at 307–331 (IQYRKAVKATLVLLPLLGITYMLFF) threads the bilayer. At 332–338 (VNPGEDE) the chain is on the extracellular side. Residues 339-368 (VSRVVFIYFNSFLESFQGFFVSVFYCFLNS) traverse the membrane as a helical segment. The Cytoplasmic segment spans residues 369–415 (EVRSAIRKRWHRWQDKHSIRARVARAMSIPTSPTRVSFHSIKQSTAV).

Belongs to the G-protein coupled receptor 2 family. Heterodimer; heterodimerizes with GPER1. Interacts (via N-terminal extracellular domain) with CRH and UCN. Interacts with DLG1; this inhibits endocytosis of CRHR1 after agonist binding. In terms of processing, C-terminal Ser or Thr residues may be phosphorylated. Post-translationally, phosphorylation at Ser-301 by PKA prevents maximal coupling to Gq-protein, and thereby negatively regulates downstream signaling.

Its subcellular location is the cell membrane. The protein resides in the endosome. In terms of biological role, G-protein coupled receptor for CRH (corticotropin-releasing factor) and UCN (urocortin). Has high affinity for CRH and UCN. Ligand binding causes a conformation change that triggers signaling via guanine nucleotide-binding proteins (G proteins) and down-stream effectors, such as adenylate cyclase. Promotes the activation of adenylate cyclase, leading to increased intracellular cAMP levels. Inhibits the activity of the calcium channel CACNA1H. Required for normal embryonic development of the adrenal gland and for normal hormonal responses to stress. Plays a role in the response to anxiogenic stimuli. This Ovis aries (Sheep) protein is Corticotropin-releasing factor receptor 1 (CRHR1).